Reading from the N-terminus, the 154-residue chain is Deoxyuridine 5'-triphosphate nucleotidohydrolase (154 aa).

Residues 64-66 (RSG), Asn-77, 81-83 (TID), and Lys-91 each bind substrate.

This sequence belongs to the dUTPase family. Homotrimer. Mg(2+) serves as cofactor.

It carries out the reaction dUTP + H2O = dUMP + diphosphate + H(+). It functions in the pathway pyrimidine metabolism; dUMP biosynthesis; dUMP from dCTP (dUTP route): step 2/2. Functionally, this enzyme is involved in nucleotide metabolism: it produces dUMP, the immediate precursor of thymidine nucleotides and it decreases the intracellular concentration of dUTP so that uracil cannot be incorporated into DNA. This is Deoxyuridine 5'-triphosphate nucleotidohydrolase from Mycobacterium avium (strain 104).